A 395-amino-acid chain; its full sequence is Putative nickel insertion protein (395 aa).

The protein belongs to the LarC family.

This is Putative nickel insertion protein from Methanopyrus kandleri (strain AV19 / DSM 6324 / JCM 9639 / NBRC 100938).